A 250-amino-acid chain; its full sequence is 3-deoxy-manno-octulosonate cytidylyltransferase (250 aa).

Belongs to the KdsB family.

The protein localises to the cytoplasm. The enzyme catalyses 3-deoxy-alpha-D-manno-oct-2-ulosonate + CTP = CMP-3-deoxy-beta-D-manno-octulosonate + diphosphate. Its pathway is nucleotide-sugar biosynthesis; CMP-3-deoxy-D-manno-octulosonate biosynthesis; CMP-3-deoxy-D-manno-octulosonate from 3-deoxy-D-manno-octulosonate and CTP: step 1/1. It participates in bacterial outer membrane biogenesis; lipopolysaccharide biosynthesis. Activates KDO (a required 8-carbon sugar) for incorporation into bacterial lipopolysaccharide in Gram-negative bacteria. In Legionella pneumophila subsp. pneumophila (strain Philadelphia 1 / ATCC 33152 / DSM 7513), this protein is 3-deoxy-manno-octulosonate cytidylyltransferase.